The primary structure comprises 421 residues: Magnesium transporter MRS2-5 (421 aa).

2 consecutive transmembrane segments (helical) span residues 357 to 377 (LLLT…AVFG) and 393 to 413 (YVLL…VLYF). The short motif at 377–379 (GMN) is the Required for magnesium transport activity element.

The protein belongs to the CorA metal ion transporter (MIT) (TC 1.A.35.5) family. As to expression, expressed in the whole plant.

Its subcellular location is the membrane. Its function is as follows. Magnesium transporter that may mediate the influx of magnesium. The chain is Magnesium transporter MRS2-5 (MRS2-5) from Arabidopsis thaliana (Mouse-ear cress).